The following is a 156-amino-acid chain: Small ribosomal subunit protein uS7c (156 aa).

The protein belongs to the universal ribosomal protein uS7 family. Part of the 30S ribosomal subunit.

Its subcellular location is the plastid. It localises to the chloroplast. In terms of biological role, one of the primary rRNA binding proteins, it binds directly to 16S rRNA where it nucleates assembly of the head domain of the 30S subunit. The polypeptide is Small ribosomal subunit protein uS7c (rps7) (Ostreococcus tauri).